The sequence spans 215 residues: Peptide methionine sulfoxide reductase MsrA (215 aa).

Cys58 is an active-site residue.

This sequence belongs to the MsrA Met sulfoxide reductase family.

The catalysed reaction is L-methionyl-[protein] + [thioredoxin]-disulfide + H2O = L-methionyl-(S)-S-oxide-[protein] + [thioredoxin]-dithiol. It carries out the reaction [thioredoxin]-disulfide + L-methionine + H2O = L-methionine (S)-S-oxide + [thioredoxin]-dithiol. Its function is as follows. Has an important function as a repair enzyme for proteins that have been inactivated by oxidation. Catalyzes the reversible oxidation-reduction of methionine sulfoxide in proteins to methionine. The polypeptide is Peptide methionine sulfoxide reductase MsrA (Pseudomonas savastanoi pv. phaseolicola (strain 1448A / Race 6) (Pseudomonas syringae pv. phaseolicola (strain 1448A / Race 6))).